Reading from the N-terminus, the 502-residue chain is 1-aminocyclopropane-1-carboxylate synthase-like protein 1 (502 aa).

Residues 15 to 35 (CPGSDSIQDLPSNKGDGLERE) form a disordered region. Glu-106 serves as a coordination point for substrate. Lys-324 carries the post-translational modification N6-(pyridoxal phosphate)lysine.

Belongs to the class-I pyridoxal-phosphate-dependent aminotransferase family.

Does not catalyze the synthesis of 1-aminocyclopropane-1-carboxylate but is capable of catalyzing the deamination of L-vinylglycine. The polypeptide is 1-aminocyclopropane-1-carboxylate synthase-like protein 1 (ACCS) (Bos taurus (Bovine)).